The primary structure comprises 262 residues: Probable carboxylesterase Culp3 (262 aa).

The signal sequence occupies residues M1–A41. A disulfide bond links C44 and C114. Residue S125 is the Nucleophile of the active site. The cysteines at positions 188 and 195 are disulfide-linked. D192 is a catalytic residue. The Proton donor/acceptor role is filled by H206. Positions L241 to R262 are disordered.

This sequence belongs to the cutinase family.

It is found in the secreted. This is Probable carboxylesterase Culp3 (cut3) from Mycobacterium tuberculosis (strain CDC 1551 / Oshkosh).